A 103-amino-acid chain; its full sequence is Large ribosomal subunit protein bL21 (103 aa).

It belongs to the bacterial ribosomal protein bL21 family. Part of the 50S ribosomal subunit. Contacts protein L20.

Functionally, this protein binds to 23S rRNA in the presence of protein L20. The chain is Large ribosomal subunit protein bL21 from Aeromonas hydrophila subsp. hydrophila (strain ATCC 7966 / DSM 30187 / BCRC 13018 / CCUG 14551 / JCM 1027 / KCTC 2358 / NCIMB 9240 / NCTC 8049).